The primary structure comprises 31 residues: Cyclotide mech-5 (31 aa).

A cross-link (cyclopeptide (Gly-Asp)) is located at residues 1 to 31 (GVIPCGESCVFIPCISSVVGCTCKNKVCYRD). 3 disulfides stabilise this stretch: Cys-5/Cys-21, Cys-9/Cys-23, and Cys-14/Cys-28.

In terms of processing, this is a cyclic peptide. Contains 3 disulfide bonds.

Probably participates in a plant defense mechanism (Potential). Binds to and induces leakage in phospholipd membranes, particularly ones containing 1-palmitoyl-2-oleophosphatidylethanolamine (POPE). In Melicytus chathamicus (Chatham Island mahoe), this protein is Cyclotide mech-5.